The chain runs to 300 residues: Transcriptional dual regulator GltC (300 aa).

The region spanning 1–58 is the HTH lysR-type domain; that stretch reads MELRQLRYFMEVAEREHVSEAADHLHVAQSAISRQIANLEEELNVTLFEREGRNIKLT. A DNA-binding region (H-T-H motif) is located at residues 18–37; that stretch reads VSEAADHLHVAQSAISRQIA.

It belongs to the LysR transcriptional regulatory family. In terms of assembly, interacts with gutamate dehydrogenase RocG.

Activated by alpha-ketoglutarate and inhibited by glutamate and by RocG. Its function is as follows. Positive regulator of glutamate biosynthesis (gltAB genes). Negatively regulates its own expression. The polypeptide is Transcriptional dual regulator GltC (gltC) (Bacillus subtilis (strain 168)).